A 23-amino-acid polypeptide reads, in one-letter code: Basic phospholipase A2 Smb-N6 (23 aa).

The protein belongs to the phospholipase A2 family. Group II subfamily. The cofactor is Ca(2+). Contains 7 disulfide bonds. As to expression, expressed by the venom gland.

The protein localises to the secreted. It catalyses the reaction a 1,2-diacyl-sn-glycero-3-phosphocholine + H2O = a 1-acyl-sn-glycero-3-phosphocholine + a fatty acid + H(+). Snake venom phospholipase A2 (PLA2) that shows myotoxic activities. PLA2 catalyzes the calcium-dependent hydrolysis of the 2-acyl groups in 3-sn-phosphoglycerides. The chain is Basic phospholipase A2 Smb-N6 from Sistrurus miliarius barbouri (Dusky pigmy rattlesnake).